Consider the following 158-residue polypeptide: Transcription elongation factor GreA (158 aa).

This sequence belongs to the GreA/GreB family.

Functionally, necessary for efficient RNA polymerase transcription elongation past template-encoded arresting sites. The arresting sites in DNA have the property of trapping a certain fraction of elongating RNA polymerases that pass through, resulting in locked ternary complexes. Cleavage of the nascent transcript by cleavage factors such as GreA or GreB allows the resumption of elongation from the new 3'terminus. GreA releases sequences of 2 to 3 nucleotides. This is Transcription elongation factor GreA from Zymomonas mobilis subsp. mobilis (strain ATCC 31821 / ZM4 / CP4).